Here is a 102-residue protein sequence, read N- to C-terminus: Small ribosomal subunit protein uS10 (102 aa).

The protein belongs to the universal ribosomal protein uS10 family. As to quaternary structure, part of the 30S ribosomal subunit.

Functionally, involved in the binding of tRNA to the ribosomes. This is Small ribosomal subunit protein uS10 from Clostridium novyi (strain NT).